A 300-amino-acid polypeptide reads, in one-letter code: Tyrosine recombinase XerC (300 aa).

One can recognise a Core-binding (CB) domain in the interval 2 to 87; it reads TSLSPLLEKF…SIKSFYKYLV (86 aa). One can recognise a Tyr recombinase domain in the interval 108-294; it reads TLPKVLPVEE…TWEQLQQVYD (187 aa). Catalysis depends on residues Arg148, Lys172, His246, Arg249, and His272. Catalysis depends on Tyr281, which acts as the O-(3'-phospho-DNA)-tyrosine intermediate.

This sequence belongs to the 'phage' integrase family. XerC subfamily. Forms a cyclic heterotetrameric complex composed of two molecules of XerC and two molecules of XerD.

The protein resides in the cytoplasm. Its function is as follows. Site-specific tyrosine recombinase, which acts by catalyzing the cutting and rejoining of the recombining DNA molecules. The XerC-XerD complex is essential to convert dimers of the bacterial chromosome into monomers to permit their segregation at cell division. It also contributes to the segregational stability of plasmids. In Myxococcus xanthus, this protein is Tyrosine recombinase XerC.